The following is a 77-amino-acid chain: Acyl carrier protein (77 aa).

The 76-residue stretch at 1-76 (MENFDKVKDI…DAVKFINSLE (76 aa)) folds into the Carrier domain. At Ser-36 the chain carries O-(pantetheine 4'-phosphoryl)serine.

It belongs to the acyl carrier protein (ACP) family. In terms of processing, 4'-phosphopantetheine is transferred from CoA to a specific serine of apo-ACP by AcpS. This modification is essential for activity because fatty acids are bound in thioester linkage to the sulfhydryl of the prosthetic group.

The protein resides in the cytoplasm. It participates in lipid metabolism; fatty acid biosynthesis. Carrier of the growing fatty acid chain in fatty acid biosynthesis. This is Acyl carrier protein from Staphylococcus aureus (strain Mu3 / ATCC 700698).